The sequence spans 246 residues: Azurocidin (246 aa).

The N-terminal stretch at 1–19 (MPALRFLALLASLLATSRV) is a signal peptide. The propeptide occupies 20-26 (GLATLAD). The Peptidase S1 domain maps to 27-242 (IVGGRRAQPQ…FRNWIDSVLN (216 aa)). C52 and C68 are oxidised to a cystine. Residues N139 and N170 are each glycosylated (N-linked (GlcNAc...) asparagine). 2 disulfide bridges follow: C148–C205 and C178–C184. Positions 245–246 (PA) are excised as a propeptide.

The protein belongs to the peptidase S1 family. Elastase subfamily.

Its subcellular location is the cytoplasmic granule membrane. Its function is as follows. This is a neutrophil granule-derived antibacterial and monocyte- and fibroblast-specific chemotactic glycoprotein. Binds heparin. The sequence is that of Azurocidin from Sus scrofa (Pig).